The primary structure comprises 457 residues: CUB1 family protein C30C2.08 (457 aa).

Coiled-coil stretches lie at residues 119–174 (TQND…NISK) and 418–448 (QELVNSLLTQCHQLIEELRDEKHQHDIEERE).

It belongs to the CUB1 family.

The protein resides in the cytoplasm. Its subcellular location is the nucleus. Its function is as follows. Involved in bleomycin tolerance with links to DNA repair and/or proteasome function. The polypeptide is CUB1 family protein C30C2.08 (Schizosaccharomyces pombe (strain 972 / ATCC 24843) (Fission yeast)).